The following is a 508-amino-acid chain: Anaerobic nitric oxide reductase transcription regulator NorR (508 aa).

Residue aspartate 56 is modified to 4-aspartylphosphate. Positions 186-415 (MIGQSPAMAR…LEHAIHRAAV (230 aa)) constitute a Sigma-54 factor interaction domain. ATP-binding positions include 214–221 (GETGVGKE) and 277–286 (ADQGTLFLDE). The segment at residues 483–502 (WAATARALELDSGNLHRLAK) is a DNA-binding region (H-T-H motif).

It participates in nitrogen metabolism; nitric oxide reduction. Required for the expression of anaerobic nitric oxide (NO) reductase, acts as a transcriptional activator for at least the norVW operon. Activation also requires sigma-54. The protein is Anaerobic nitric oxide reductase transcription regulator NorR of Aeromonas hydrophila subsp. hydrophila (strain ATCC 7966 / DSM 30187 / BCRC 13018 / CCUG 14551 / JCM 1027 / KCTC 2358 / NCIMB 9240 / NCTC 8049).